We begin with the raw amino-acid sequence, 364 residues long: CLIP domain-containing serine protease B15 (364 aa).

A signal peptide spans 1–19; it reads MRWLVCLIVSWCSLVPLGA. The region spanning 30 to 89 is the Clip domain; it reads PCQTPSGTAGTCEPVKNCSYVRKILKSPDFSHYDTTYLDTLKCGDLMVPMRKKPIPLLCC. Cystine bridges form between C31–C88, C41–C72, and C47–C89. N-linked (GlcNAc...) asparagine glycosylation occurs at N46. A Peptidase S1 domain is found at 107-359; that stretch reads IYFGEETERG…YLDWMETVMF (253 aa). N-linked (GlcNAc...) asparagine glycosylation is present at N131. A disulfide bridge links C137 with C153. H152 serves as the catalytic Charge relay system. Residues N171, N177, and N206 are each glycosylated (N-linked (GlcNAc...) asparagine). Residue D212 is the Charge relay system of the active site. A disulfide bridge links C279 with C296. N287 and N301 each carry an N-linked (GlcNAc...) asparagine glycan. C306 and C335 are joined by a disulfide. S310 functions as the Charge relay system in the catalytic mechanism.

It belongs to the peptidase S1 family. CLIP subfamily. N-glycosylated. Post-translationally, proteolytically cleaved. In terms of tissue distribution, expressed by a subpopulation of hemocytes.

Its subcellular location is the secreted. In terms of biological role, serine protease. Plays a role in innate immunity against infections by parasite P.berghei and by Gram-negative bacteria such as E.coli. In response to P.berghei infection, contributes to the clearing of parasite ookinetes independent of melanization, an innate immune response which consists in the deposition of melanin pigments on invading pathogens and parasites. This Anopheles gambiae (African malaria mosquito) protein is CLIP domain-containing serine protease B15.